The following is a 382-amino-acid chain: RNA binding protein fox-1 homolog 1 (382 aa).

Residues Met-1–Val-121 are disordered. A compositionally biased stretch (polar residues) spans Gln-70–Gly-87. Residues Thr-88 to Asp-99 show a composition bias toward low complexity. Residues Gly-100 to Lys-113 show a composition bias toward polar residues. Positions Lys-117 to Ala-193 constitute an RRM domain. At Arg-317 the chain carries Asymmetric dimethylarginine. Positions Met-357–Ser-382 are disordered.

As to quaternary structure, binds to the C-terminus of ATXN2.

It is found in the nucleus. It localises to the cytoplasm. Functionally, RNA-binding protein that regulates alternative splicing events by binding to 5'-UGCAUGU-3' elements. Prevents binding of U2AF2 to the 3'-splice site. Regulates alternative splicing of tissue-specific exons and of differentially spliced exons during erythropoiesis. The protein is RNA binding protein fox-1 homolog 1 (RBFOX1) of Pongo abelii (Sumatran orangutan).